A 643-amino-acid polypeptide reads, in one-letter code: Maternal embryonic leucine zipper kinase (643 aa).

Residues 11-263 enclose the Protein kinase domain; it reads YELYETIGTG…MRNLLNHPWV (253 aa). ATP contacts are provided by residues 17–25 and lysine 40; that span reads IGTGGFAKV. The residue at position 56 (threonine 56) is a Phosphothreonine; by autocatalysis. The Proton acceptor role is filled by aspartate 132. A Phosphotyrosine; by autocatalysis modification is found at tyrosine 163. Position 167 is a phosphothreonine; by autocatalysis (threonine 167). A phosphoserine; by autocatalysis mark is found at serine 171 and serine 253. A UBA-like region spans residues 282-321; it reads LDEDCVTELSVHHRSSRQTMEDLISSWQYDHLTATYLLLL. The autoinhibitory region stretch occupies residues 326–643; it reads RGKPARLQLL…VEDILSGCKM (318 aa). Phosphoserine; by autocatalysis occurs at positions 336 and 343. Serine 352 bears the Phosphoserine mark. A phosphoserine; by autocatalysis mark is found at serine 399 and serine 423. Threonine 486 is subject to Phosphothreonine; by autocatalysis. Serine 490 bears the Phosphoserine mark. Residue serine 497 is modified to Phosphoserine; by autocatalysis. Residue threonine 510 is modified to Phosphothreonine. Serine 521 is subject to Phosphoserine; by autocatalysis. Threonine 531 carries the phosphothreonine; by autocatalysis modification. In terms of domain architecture, KA1 spans 594–643; that stretch reads SDFGKVTMQFELEVCQLQRPDVVGIRRQRLKGDAWVYKRLVEDILSGCKM.

This sequence belongs to the protein kinase superfamily. CAMK Ser/Thr protein kinase family. SNF1 subfamily. Monomer. Interacts with ZNF622 and PPP1R8. In terms of processing, autophosphorylated: autophosphorylation of the T-loop at Thr-167 and Ser-171 is required for activation. In terms of tissue distribution, expressed in testis, ovary, thymus, spleen and T-cell. Expressed by neural progenitors: highly enriched in cultures containing multipotent progenitors.

Its subcellular location is the cell membrane. The enzyme catalyses L-tyrosyl-[protein] + ATP = O-phospho-L-tyrosyl-[protein] + ADP + H(+). It carries out the reaction L-seryl-[protein] + ATP = O-phospho-L-seryl-[protein] + ADP + H(+). The catalysed reaction is L-threonyl-[protein] + ATP = O-phospho-L-threonyl-[protein] + ADP + H(+). With respect to regulation, activated by autophosphorylation of the T-loop at Thr-167 and Ser-171: in contrast to other members of the SNF1 subfamily, phosphorylation at Thr-167 is not mediated by STK11/LKB1 but via autophosphorylation instead. Inhibited by calcium-binding. Kinase activity is also regulated by reducing agents: dithiothreitol (DTT) or reduced glutathione are required for kinase activity in vitro; such dependence is however not due to the presence of disulfide bonds. Its function is as follows. Serine/threonine-protein kinase involved in various processes such as cell cycle regulation, self-renewal of stem cells, apoptosis and splicing regulation. Has a broad substrate specificity; phosphorylates BCL2L14, CDC25B, MAP3K5/ASK1 and ZNF622. Acts as an activator of apoptosis by phosphorylating and activating MAP3K5/ASK1. Acts as a regulator of cell cycle, notably by mediating phosphorylation of CDC25B, promoting localization of CDC25B to the centrosome and the spindle poles during mitosis. Plays a key role in cell proliferation. Required for proliferation of embryonic and postnatal multipotent neural progenitors. Phosphorylates and inhibits BCL2L14. Also involved in the inhibition of spliceosome assembly during mitosis by phosphorylating ZNF622, thereby contributing to its redirection to the nucleus. May also play a role in primitive hematopoiesis. The chain is Maternal embryonic leucine zipper kinase (Melk) from Mus musculus (Mouse).